We begin with the raw amino-acid sequence, 237 residues long: UPF0280 protein Mbur_0309 (237 aa).

This sequence belongs to the UPF0280 family.

The chain is UPF0280 protein Mbur_0309 from Methanococcoides burtonii (strain DSM 6242 / NBRC 107633 / OCM 468 / ACE-M).